A 212-amino-acid polypeptide reads, in one-letter code: Pyridoxine/pyridoxamine 5'-phosphate oxidase (212 aa).

Residues 8–11 (RREY) and K66 each bind substrate. FMN is bound by residues 61-66 (RIVLLK), 76-77 (FT), R82, K83, and Q105. Residues Y123, R127, and S131 each contribute to the substrate site. FMN contacts are provided by residues 140–141 (QS) and W185. Residue 191–193 (RLH) participates in substrate binding. Position 195 (R195) interacts with FMN.

Belongs to the pyridoxamine 5'-phosphate oxidase family. Homodimer. FMN serves as cofactor.

The enzyme catalyses pyridoxamine 5'-phosphate + O2 + H2O = pyridoxal 5'-phosphate + H2O2 + NH4(+). The catalysed reaction is pyridoxine 5'-phosphate + O2 = pyridoxal 5'-phosphate + H2O2. Its pathway is cofactor metabolism; pyridoxal 5'-phosphate salvage; pyridoxal 5'-phosphate from pyridoxamine 5'-phosphate: step 1/1. It functions in the pathway cofactor metabolism; pyridoxal 5'-phosphate salvage; pyridoxal 5'-phosphate from pyridoxine 5'-phosphate: step 1/1. Functionally, catalyzes the oxidation of either pyridoxine 5'-phosphate (PNP) or pyridoxamine 5'-phosphate (PMP) into pyridoxal 5'-phosphate (PLP). The chain is Pyridoxine/pyridoxamine 5'-phosphate oxidase from Shewanella baltica (strain OS155 / ATCC BAA-1091).